A 297-amino-acid polypeptide reads, in one-letter code: MNRTGDDETLSTQVKAEVLAEALPWLKQLHGKVVVVKYSGNAMTDDMLRRAFAADMAFLRNCGIHPVVVHGGGPQITAMLRRLGIADDFKGGFRVTTPEVLDVARMVLFGQVGRELVNLINAHGPYAVGITGEDAQLFTAGRRSATVDGMATDIGLVGDVDQVNIAAVLDLISAHRIPVVSTLAPDRDGVVHNINADTAAAALAETLGAEKLLMLTNVEGLYTRWPERDSLVNEIDSAALAQLLPTLEAGMIPKVEACLRAVTGGVPSAHVIDGRVKHCVLVELLTNEGTGTKVVSA.

Substrate-binding positions include 72-73 (GG), Arg-94, and Asn-193.

This sequence belongs to the acetylglutamate kinase family. ArgB subfamily.

It localises to the cytoplasm. The enzyme catalyses N-acetyl-L-glutamate + ATP = N-acetyl-L-glutamyl 5-phosphate + ADP. It participates in amino-acid biosynthesis; L-arginine biosynthesis; N(2)-acetyl-L-ornithine from L-glutamate: step 2/4. Functionally, catalyzes the ATP-dependent phosphorylation of N-acetyl-L-glutamate. This is Acetylglutamate kinase from Mycobacterium leprae (strain TN).